The primary structure comprises 1456 residues: Putative 1-phosphatidylinositol-3-phosphate 5-kinase FAB1D (1456 aa).

The span at 1-19 (MTPSNSLSSSERSLSGECS) shows a compositional bias: low complexity. Disordered stretches follow at residues 1–110 (MTPS…EVDG), 533–592 (PVSV…NDIE), 925–944 (ENDNKVSDSGSNGGIDTPLV), 967–987 (VPEDNESQTLCSSSPDTTSPI), 1003–1022 (NGQEADKSIPVTGESLDDEV), and 1137–1159 (NNQDSKQTDRDVSRFSSESTNRL). Residues 43–57 (ELTKEVKVDRLERKS) are compositionally biased toward basic and acidic residues. Acidic residues predominate over residues 86 to 110 (REDDSDDVPVWEPPEPENPEDEVDG). The span at 533 to 544 (PVSVDTDVSTTS) shows a compositional bias: low complexity. Residues 973-987 (SQTLCSSSPDTTSPI) show a composition bias toward polar residues. In terms of domain architecture, PIPK spans 1115–1443 (NNEESKKPLS…RFRKFMKTHF (329 aa)). The span at 1150-1159 (RFSSESTNRL) shows a compositional bias: polar residues.

In terms of assembly, component of the PI(3,5)P2 regulatory complex at least composed of ATG18, SAC/FIG4, FAB1 and VAC14. The cofactor is Mg(2+). Mn(2+) serves as cofactor.

The catalysed reaction is a 1,2-diacyl-sn-glycero-3-phospho-(1D-myo-inositol-3-phosphate) + ATP = a 1,2-diacyl-sn-glycero-3-phospho-(1D-myo-inositol-3,5-bisphosphate) + ADP + H(+). In terms of biological role, the PI(3,5)P2 regulatory complex regulates both the synthesis and turnover of phosphatidylinositol 3,5-bisphosphate (PtdIns(3,5)P2). Catalyzes the phosphorylation of phosphatidylinositol 3-phosphate on the fifth hydroxyl of the myo-inositol ring, to form phosphatidylinositol 3,5-bisphosphate. This Arabidopsis thaliana (Mouse-ear cress) protein is Putative 1-phosphatidylinositol-3-phosphate 5-kinase FAB1D (FAB1D).